Reading from the N-terminus, the 454-residue chain is L-cysteine desulfhydrase (454 aa).

Residues 1–25 (MEAGERRNGDSMSHNHRAPKKPRLA) are disordered. The span at 14–23 (HNHRAPKKPR) shows a compositional bias: basic residues. Lys257 carries the post-translational modification N6-(pyridoxal phosphate)lysine.

Belongs to the class-V pyridoxal-phosphate-dependent aminotransferase family. The cofactor is pyridoxal 5'-phosphate. Highly expressed in stems and cauline leaves, and at lower levels in roots, rosette leaves and flowers.

The catalysed reaction is L-cysteine + H2O = hydrogen sulfide + pyruvate + NH4(+) + H(+). Catalyzes the production of hydrogen sulfide (H2S) from cysteine. Is mainly responsible for the degradation of cysteine to generate H2S, a regulator of stomatal movement and closure. The polypeptide is L-cysteine desulfhydrase (LCD) (Arabidopsis thaliana (Mouse-ear cress)).